A 362-amino-acid chain; its full sequence is Probable RNA methyltransferase Tbd_1951 (362 aa).

The active-site Proton acceptor is E89. The region spanning 92 to 318 (LLPRDGVCVS…AKLRHSAGQD (227 aa)) is the Radical SAM core domain. A disulfide bond links C99 and C323. Positions 106, 110, and 113 each coordinate [4Fe-4S] cluster. Residues 151–152 (GE), S181, 204–206 (SLH), and N280 contribute to the S-adenosyl-L-methionine site. C323 acts as the S-methylcysteine intermediate in catalysis. The interval 342 to 362 (LPSAETPAASPKAAASIGFPG) is disordered. The span at 343–362 (PSAETPAASPKAAASIGFPG) shows a compositional bias: low complexity.

This sequence belongs to the radical SAM superfamily. RlmN family. [4Fe-4S] cluster serves as cofactor.

The protein resides in the cytoplasm. This Thiobacillus denitrificans (strain ATCC 25259 / T1) protein is Probable RNA methyltransferase Tbd_1951.